Here is a 304-residue protein sequence, read N- to C-terminus: UPF0282 protein TSIB_1029 (304 aa).

It belongs to the UPF0282 family.

The chain is UPF0282 protein TSIB_1029 from Thermococcus sibiricus (strain DSM 12597 / MM 739).